We begin with the raw amino-acid sequence, 378 residues long: Queuine tRNA-ribosyltransferase (378 aa).

Asp-91 (proton acceptor) is an active-site residue. Residues 91–95 (DSGGF), Asp-145, Gln-189, and Gly-216 each bind substrate. Residues 247 to 253 (GVGKPED) form an RNA binding region. Residue Asp-266 is the Nucleophile of the active site. The RNA binding; important for wobble base 34 recognition stretch occupies residues 271 to 275 (TRNAR). Positions 304, 306, 309, and 335 each coordinate Zn(2+).

Belongs to the queuine tRNA-ribosyltransferase family. In terms of assembly, homodimer. Within each dimer, one monomer is responsible for RNA recognition and catalysis, while the other monomer binds to the replacement base PreQ1. Zn(2+) is required as a cofactor.

It carries out the reaction 7-aminomethyl-7-carbaguanine + guanosine(34) in tRNA = 7-aminomethyl-7-carbaguanosine(34) in tRNA + guanine. Its pathway is tRNA modification; tRNA-queuosine biosynthesis. In terms of biological role, catalyzes the base-exchange of a guanine (G) residue with the queuine precursor 7-aminomethyl-7-deazaguanine (PreQ1) at position 34 (anticodon wobble position) in tRNAs with GU(N) anticodons (tRNA-Asp, -Asn, -His and -Tyr). Catalysis occurs through a double-displacement mechanism. The nucleophile active site attacks the C1' of nucleotide 34 to detach the guanine base from the RNA, forming a covalent enzyme-RNA intermediate. The proton acceptor active site deprotonates the incoming PreQ1, allowing a nucleophilic attack on the C1' of the ribose to form the product. After dissociation, two additional enzymatic reactions on the tRNA convert PreQ1 to queuine (Q), resulting in the hypermodified nucleoside queuosine (7-(((4,5-cis-dihydroxy-2-cyclopenten-1-yl)amino)methyl)-7-deazaguanosine). The chain is Queuine tRNA-ribosyltransferase from Vibrio atlanticus (strain LGP32) (Vibrio splendidus (strain Mel32)).